Here is a 494-residue protein sequence, read N- to C-terminus: Glutamate--tRNA ligase (494 aa).

The 'HIGH' region motif lies at 15–25 (PSPTGNPHVGL). Residues cysteine 112, cysteine 114, cysteine 139, and glutamate 141 each contribute to the Zn(2+) site. Residues 260–264 (KLSKR) carry the 'KMSKS' region motif. Residue lysine 263 participates in ATP binding.

It belongs to the class-I aminoacyl-tRNA synthetase family. Glutamate--tRNA ligase type 1 subfamily. In terms of assembly, monomer. It depends on Zn(2+) as a cofactor.

It localises to the cytoplasm. The catalysed reaction is tRNA(Glu) + L-glutamate + ATP = L-glutamyl-tRNA(Glu) + AMP + diphosphate. Catalyzes the attachment of glutamate to tRNA(Glu) in a two-step reaction: glutamate is first activated by ATP to form Glu-AMP and then transferred to the acceptor end of tRNA(Glu). The chain is Glutamate--tRNA ligase from Streptomyces coelicolor (strain ATCC BAA-471 / A3(2) / M145).